Here is a 405-residue protein sequence, read N- to C-terminus: Secreted aspartic protease 8 (405 aa).

The N-terminal stretch at 1–25 (MVSIITFTKNVLVTLAFALLAQGLA) is a signal peptide. Residue Asn-50 is glycosylated (N-linked (GlcNAc...) asparagine). The tract at residues 52-78 (TAHGQHHQSQQQQQQQQQQPAQKRGTV) is disordered. The span at 58–70 (HQSQQQQQQQQQQ) shows a compositional bias: low complexity. Positions 89–392 (YAATITVGSN…DLDGNTISLA (304 aa)) constitute a Peptidase A1 domain. The active site involves Asp-107. 107 to 109 (DTG) serves as a coordination point for pepstatin A. Cysteines 122 and 134 form a disulfide. Asp-292 is an active-site residue. Residue 292-296 (DSGTT) coordinates pepstatin A. Cys-327 and Cys-358 are disulfide-bonded.

Belongs to the peptidase A1 family. Monomer.

The protein localises to the secreted. The enzyme catalyses Preferential cleavage at the carboxyl of hydrophobic amino acids, but fails to cleave 15-Leu-|-Tyr-16, 16-Tyr-|-Leu-17 and 24-Phe-|-Phe-25 of insulin B chain. Activates trypsinogen, and degrades keratin.. Functionally, secreted aspartic peptidases (SAPs) are a group of ten acidic hydrolases considered as key virulence factors. These enzymes supply the fungus with nutrient amino acids as well as are able to degrade the selected host's proteins involved in the immune defense. Moreover, acts toward human hemoglobin though limited proteolysis to generate a variety of antimicrobial hemocidins, enabling to compete with the other microorganisms of the same physiological niche using the microbicidal peptides generated from the host protein. Plays a key role in defense against host by cleaving histatin-5 (Hst 5), a peptide from human saliva that carries out fungicidal activity. The cleavage rate decreases in an order of SAP2 &gt; SAP9 &gt; SAP3 &gt; SAP7 &gt; SAP4 &gt; SAP1 &gt; SAP8. The hydrolysis of Hst 5 by SAP8 causes production of the DSHAKRHHGY, HHSHRGY and FHEKHHSHRGY peptides. This Candida albicans (Yeast) protein is Secreted aspartic protease 8.